A 709-amino-acid chain; its full sequence is Polyribonucleotide nucleotidyltransferase (709 aa).

Mg(2+) contacts are provided by D487 and D493. In terms of domain architecture, KH spans 554-613; the sequence is PRIHTMKISSDKIKDVIGKGGAVIRALCEETGTTIEIEDDGTIKIAATEGAAAKEAIRRI. Positions 623 to 691 constitute an S1 motif domain; it reads GKIYPGKVMR…RQGRIRLSIK (69 aa).

This sequence belongs to the polyribonucleotide nucleotidyltransferase family. As to quaternary structure, component of the RNA degradosome, which is a multiprotein complex involved in RNA processing and mRNA degradation. Mg(2+) is required as a cofactor.

It is found in the cytoplasm. It catalyses the reaction RNA(n+1) + phosphate = RNA(n) + a ribonucleoside 5'-diphosphate. Involved in mRNA degradation. Catalyzes the phosphorolysis of single-stranded polyribonucleotides processively in the 3'- to 5'-direction. This is Polyribonucleotide nucleotidyltransferase from Aliivibrio salmonicida (strain LFI1238) (Vibrio salmonicida (strain LFI1238)).